We begin with the raw amino-acid sequence, 334 residues long: Mucin-15 (334 aa).

A signal peptide spans 1 to 23; that stretch reads MLALAKILLISTLFYSLLSGSHG. Residues 24–236 lie on the Extracellular side of the membrane; it reads KENQDINTTQ…SDPQKENRNT (213 aa). Residues N30, N61, N79, N90, N148, N155, N163, N218, and N225 are each glycosylated (N-linked (GlcNAc...) asparagine). Positions 64 to 104 are disordered; the sequence is TSNLKASHSPPLNLPNNSHGITDFSSNSSAEHSLGSLKPTS. Residues 77–94 show a composition bias toward polar residues; sequence LPNNSHGITDFSSNSSAE. The chain crosses the membrane as a helical span at residues 237–257; the sequence is GIVFGAILGAILGVSLLTLVG. Over 258–334 the chain is Cytoplasmic; that stretch reads YLLCGKRKTD…DDIPPLRTSV (77 aa). Positions 304–334 are disordered; it reads PTLNDSAMPESEENARDGIPMDDIPPLRTSV.

Highly glycosylated (N- and O-linked carbohydrates). As to expression, expressed in spleen, thymus, prostate, testis, ovary, small intestine, colon, peripheral blood leukocyte, bone marrow, lymph node and lung.

The protein resides in the cell membrane. The protein localises to the secreted. Its function is as follows. May play a role in the cell adhesion to the extracellular matrix. The chain is Mucin-15 (MUC15) from Homo sapiens (Human).